The sequence spans 158 residues: Ribosome maturation factor RimP (158 aa).

The protein belongs to the RimP family.

It is found in the cytoplasm. Functionally, required for maturation of 30S ribosomal subunits. The protein is Ribosome maturation factor RimP of Lactobacillus delbrueckii subsp. bulgaricus (strain ATCC 11842 / DSM 20081 / BCRC 10696 / JCM 1002 / NBRC 13953 / NCIMB 11778 / NCTC 12712 / WDCM 00102 / Lb 14).